The following is an 83-amino-acid chain: Large ribosomal subunit protein bL27 (83 aa).

A disordered region spans residues 1-26; that stretch reads MAHKKAGGSSKNGRDSRGQRRGVKRF.

It belongs to the bacterial ribosomal protein bL27 family.

This is Large ribosomal subunit protein bL27 from Desulfosudis oleivorans (strain DSM 6200 / JCM 39069 / Hxd3) (Desulfococcus oleovorans).